Here is a 196-residue protein sequence, read N- to C-terminus: MEVYNLRNTKEKILTATEQLIYKKGYTGTSINDILDETATGKGQFYYYFDSKKEACLAVIDNHVKIWQKHLLNGILSRDESPLANLKEMLDWIYSDHAQKKIYYGCPVGNLVIELSALDEDFRKPLEQLFSDLQKKIAENLSALTGLLVKQNLPAAHAIIAQIQGSLLLLKVTQDLNVLESNFDLLKTSFEKVGEK.

The HTH tetR-type domain occupies 7 to 67 (RNTKEKILTA…AVIDNHVKIW (61 aa)). A DNA-binding region (H-T-H motif) is located at residues 30–49 (SINDILDETATGKGQFYYYF).

This is an uncharacterized protein from Lactococcus lactis subsp. lactis (Streptococcus lactis).